We begin with the raw amino-acid sequence, 543 residues long: Carboxypeptidase Y homolog A (543 aa).

The N-terminal stretch at 1 to 17 is a signal peptide; the sequence is MRVAASALLAGAASAAV. A propeptide spanning residues 18–128 is cleaved from the precursor; the sequence is APQQQILKFP…KLEQFDLRVK (111 aa). 5 disulfide bridges follow: Cys-182–Cys-421, Cys-316–Cys-330, Cys-340–Cys-363, Cys-347–Cys-356, and Cys-385–Cys-391. Asn-213 carries N-linked (GlcNAc...) asparagine glycosylation. Ser-269 is a catalytic residue. Residue Asp-460 is part of the active site. The N-linked (GlcNAc...) asparagine glycan is linked to Asn-508. His-519 is a catalytic residue.

The protein belongs to the peptidase S10 family.

The protein localises to the vacuole. It catalyses the reaction Release of a C-terminal amino acid with broad specificity.. Its function is as follows. Vacuolar carboxypeptidase involved in degradation of small peptides. Digests preferentially peptides containing an aliphatic or hydrophobic residue in P1' position, as well as methionine, leucine or phenylalanine in P1 position of ester substrate. The chain is Carboxypeptidase Y homolog A (CPYA) from Phaeosphaeria nodorum (strain SN15 / ATCC MYA-4574 / FGSC 10173) (Glume blotch fungus).